The chain runs to 88 residues: UPF0237 protein SMU_72 (88 aa).

The region spanning Ile4 to Gln77 is the ACT domain.

It belongs to the UPF0237 family. Homodimer.

This is UPF0237 protein SMU_72 from Streptococcus mutans serotype c (strain ATCC 700610 / UA159).